A 355-amino-acid polypeptide reads, in one-letter code: S-adenosylmethionine:tRNA ribosyltransferase-isomerase (355 aa).

This sequence belongs to the QueA family. Monomer.

It localises to the cytoplasm. It carries out the reaction 7-aminomethyl-7-carbaguanosine(34) in tRNA + S-adenosyl-L-methionine = epoxyqueuosine(34) in tRNA + adenine + L-methionine + 2 H(+). The protein operates within tRNA modification; tRNA-queuosine biosynthesis. Functionally, transfers and isomerizes the ribose moiety from AdoMet to the 7-aminomethyl group of 7-deazaguanine (preQ1-tRNA) to give epoxyqueuosine (oQ-tRNA). The protein is S-adenosylmethionine:tRNA ribosyltransferase-isomerase of Photorhabdus laumondii subsp. laumondii (strain DSM 15139 / CIP 105565 / TT01) (Photorhabdus luminescens subsp. laumondii).